The chain runs to 149 residues: Urease accessory protein UreE (149 aa).

This sequence belongs to the UreE family.

The protein resides in the cytoplasm. Functionally, involved in urease metallocenter assembly. Binds nickel. Probably functions as a nickel donor during metallocenter assembly. The sequence is that of Urease accessory protein UreE from Corynebacterium efficiens (strain DSM 44549 / YS-314 / AJ 12310 / JCM 11189 / NBRC 100395).